The chain runs to 108 residues: Zinc metalloproteinase/disintegrin (108 aa).

The Peptidase M12B domain occupies 1-19; it reads NEYQTYLTDRNPQCILNEP. The propeptide occupies 20–35; it reads LRTDTVSTPVSGNELL. In terms of domain architecture, Disintegrin spans 27–108; that stretch reads TPVSGNELLE…ADCPRNGFYG (82 aa). Intrachain disulfides connect cysteine 41–cysteine 56, cysteine 43–cysteine 51, cysteine 50–cysteine 73, cysteine 64–cysteine 70, cysteine 69–cysteine 94, and cysteine 82–cysteine 101. The short motif at 86–88 is the Cell attachment site; atypical (KGD) element; sequence KGD.

The protein belongs to the venom metalloproteinase (M12B) family. P-II subfamily. P-IIa sub-subfamily. As to quaternary structure, monomeric (disintegrin). Zn(2+) serves as cofactor. Expressed by the venom gland.

The protein resides in the secreted. Impairs hemostasis in the envenomed animal. In terms of biological role, inhibits platelet aggregation induced by ADP, thrombin, platelet-activating factor and collagen. Acts by inhibiting fibrinogen interaction with platelet receptors GPIIb/GPIIIa (ITGA2B/ITGB3). This Gloydius brevicauda (Korean slamosa snake) protein is Zinc metalloproteinase/disintegrin.